Here is a 221-residue protein sequence, read N- to C-terminus: MDPNRYQGIGMTSRRTRERLVSRLAEEGIRDPRVLQAILEVPRHLFVDEALASRAYDNTPLPIGHGQTISQPWVVARMTELLIEQSIPERVLELGTGSGYQAAVLAYLGVEVYTIERIKALADQARQRMRDLRLHRVHVRYGDGSEGWAQHAPYQGIIVTAAPEEVPDPLWDQLDEGGRLVAPLGGAGRPQELVLIERVDGELRRRHVASVSFVPLLGGCR.

Residue Ser-70 is part of the active site.

It belongs to the methyltransferase superfamily. L-isoaspartyl/D-aspartyl protein methyltransferase family.

It localises to the cytoplasm. It catalyses the reaction [protein]-L-isoaspartate + S-adenosyl-L-methionine = [protein]-L-isoaspartate alpha-methyl ester + S-adenosyl-L-homocysteine. Its function is as follows. Catalyzes the methyl esterification of L-isoaspartyl residues in peptides and proteins that result from spontaneous decomposition of normal L-aspartyl and L-asparaginyl residues. It plays a role in the repair and/or degradation of damaged proteins. The polypeptide is Protein-L-isoaspartate O-methyltransferase (Alkalilimnicola ehrlichii (strain ATCC BAA-1101 / DSM 17681 / MLHE-1)).